The chain runs to 215 residues: MKTVLLTGFDPFGGESINPAWEVAKSLHEKTIGEYKIISKQVPTVFHKSISVLKEYIEELAPEFIICIGQAGGRPDITIERVAINIDDARIADNEGNQPVDVPVVEEGPAAYWSTLPMKAIVKKLQEEGIPASVSQTAGTFVCNHLFYGLMHELEKHDTKMKGGFIHIPFLPEQASNYPGQPSMSLSTIRKGIELAVEVTTTVEVDIVEVGGTTH.

Residues Glu80, Cys143, and His167 contribute to the active site.

The protein belongs to the peptidase C15 family. As to quaternary structure, homotetramer.

It is found in the cytoplasm. The enzyme catalyses Release of an N-terminal pyroglutamyl group from a polypeptide, the second amino acid generally not being Pro.. In terms of biological role, removes 5-oxoproline from various penultimate amino acid residues except L-proline. The chain is Pyrrolidone-carboxylate peptidase from Bacillus anthracis.